We begin with the raw amino-acid sequence, 223 residues long: RNA polymerase sigma-H factor (223 aa).

A Polymerase core binding motif is present at residues 67–80 (DIVQEGMIGLYKSI). A DNA-binding region (H-T-H motif) is located at residues 187 to 206 (YQEISEELNRHVKSIDNALQ).

Belongs to the sigma-70 factor family.

Its function is as follows. Sigma factors are initiation factors that promote the attachment of RNA polymerase to specific initiation sites and are then released. This sigma factor is involved in the transition to post-exponential phase in the beginning of sporulation. The protein is RNA polymerase sigma-H factor (sigH) of Bacillus licheniformis.